We begin with the raw amino-acid sequence, 130 residues long: Large ribosomal subunit protein bL17 (130 aa).

The protein belongs to the bacterial ribosomal protein bL17 family. Part of the 50S ribosomal subunit. Contacts protein L32.

In Azotobacter vinelandii (strain DJ / ATCC BAA-1303), this protein is Large ribosomal subunit protein bL17.